Here is a 510-residue protein sequence, read N- to C-terminus: Beta-1,4 N-acetylgalactosaminyltransferase 2 (510 aa).

The Cytoplasmic segment spans residues Met1–Leu15. A helical; Signal-anchor for type II membrane protein membrane pass occupies residues Leu16–Val32. The Lumenal portion of the chain corresponds to Arg33–Thr510. Residue Asn390 is glycosylated (N-linked (GlcNAc...) asparagine).

This sequence belongs to the glycosyltransferase 2 family. As to quaternary structure, homodimer; disulfide-linked.

It localises to the golgi apparatus. The protein localises to the trans-Golgi network membrane. It catalyses the reaction an N-acetyl-alpha-neuraminyl-(2-&gt;3)-beta-D-galactosyl derivative + UDP-N-acetyl-alpha-D-galactosamine = an N-acetyl-beta-D-galactosaminyl-(1-&gt;4)-[N-acetyl-alpha-neuraminyl-(2-&gt;3)]-beta-D-galactosyl derivative + UDP + H(+). The catalysed reaction is a 3-O-{alpha-Neu5Ac-(2-&gt;3)-beta-D-Gal-(1-&gt;3)-[alpha-Neu5Ac-(2-&gt;6)]-alpha-D-GalNAc}-L-seryl-[protein] + UDP-N-acetyl-alpha-D-galactosamine = a 3-O-{[alpha-Neu5Ac-(2-&gt;3)]-beta-D-GalNAc-(1-&gt;4)-beta-D-Gal-(1-&gt;3)-[alpha-Neu5Ac-(2-&gt;6)]-alpha-D-GalNAc}-L-seryl-[protein] + UDP + H(+). It carries out the reaction a 3-O-{alpha-Neu5Ac-(2-&gt;3)-beta-D-Gal-(1-&gt;3)-[alpha-Neu5Ac-(2-&gt;6)]-alpha-D-GalNAc}-L-threonyl-[protein] + UDP-N-acetyl-alpha-D-galactosamine = a 3-O-{[alpha-Neu5Ac-(2-&gt;3)]-beta-D-GalNAc-(1-&gt;4)-beta-D-Gal-(1-&gt;3)-[alpha-Neu5Ac-(2-&gt;6)]-alpha-D-GalNAc}-L-threonyl-[protein] + UDP + H(+). The enzyme catalyses a neolactoside IV(3)-alpha-NeuAc-nLc4Cer + UDP-N-acetyl-alpha-D-galactosamine = a neolactoside IV(4)-GalNAc,IV(3)-alpha-NeuAc-nLc4Cer + UDP + H(+). The protein operates within protein modification; protein glycosylation. It participates in glycolipid biosynthesis. Its function is as follows. Beta-1,4 N-acetylgalactosaminyltransferase involved in the biosynthesis of T-lymphocyte CT glycan antigen carried by CD45 family of protein phosphatases. Catalyzes the transfer of N-acetylgalactosamine (GalNAc) group in a beta-1,4-linkage from UDP-GalNAc to the galactose residue of NeuAcalpha2-&gt;3Gal-R to form GalNAcbeta1-&gt;4(NeuAcalpha2-&gt;3)Gal-R glycan epitope. In Mus musculus (Mouse), this protein is Beta-1,4 N-acetylgalactosaminyltransferase 2.